Reading from the N-terminus, the 660-residue chain is Probable alpha-galactosidase D (660 aa).

Positions 1-20 are cleaved as a signal peptide; it reads MLLHFILYAALSSVVTSVSL. N-linked (GlcNAc...) asparagine glycans are attached at residues Asn-47, Asn-91, and Asn-129. Cys-124 and Cys-157 are oxidised to a cystine. The active-site Nucleophile is the Asp-155. N-linked (GlcNAc...) asparagine glycans are attached at residues Asn-182 and Asn-191. 200 to 204 contacts substrate; it reads EWGIS. Asp-222 (proton donor) is an active-site residue. N-linked (GlcNAc...) asparagine glycans are attached at residues Asn-351, Asn-403, Asn-460, Asn-492, Asn-506, Asn-514, and Asn-584.

Belongs to the glycosyl hydrolase 27 family.

The protein localises to the secreted. The enzyme catalyses Hydrolysis of terminal, non-reducing alpha-D-galactose residues in alpha-D-galactosides, including galactose oligosaccharides, galactomannans and galactolipids.. In terms of biological role, hydrolyzes a variety of simple alpha-D-galactoside as well as more complex molecules such as oligosaccharides and polysaccharides. In Aspergillus niger (strain ATCC MYA-4892 / CBS 513.88 / FGSC A1513), this protein is Probable alpha-galactosidase D (aglD).